An 88-amino-acid chain; its full sequence is Small ribosomal subunit protein uS15c (88 aa).

This sequence belongs to the universal ribosomal protein uS15 family. In terms of assembly, part of the 30S ribosomal subunit.

Its subcellular location is the plastid. The protein localises to the chloroplast. The chain is Small ribosomal subunit protein uS15c (rps15) from Arabidopsis thaliana (Mouse-ear cress).